A 379-amino-acid chain; its full sequence is S-adenosylmethionine:tRNA ribosyltransferase-isomerase (379 aa).

The disordered stretch occupies residues Ala35–Ser58.

The protein belongs to the QueA family. As to quaternary structure, monomer.

The protein resides in the cytoplasm. The enzyme catalyses 7-aminomethyl-7-carbaguanosine(34) in tRNA + S-adenosyl-L-methionine = epoxyqueuosine(34) in tRNA + adenine + L-methionine + 2 H(+). The protein operates within tRNA modification; tRNA-queuosine biosynthesis. In terms of biological role, transfers and isomerizes the ribose moiety from AdoMet to the 7-aminomethyl group of 7-deazaguanine (preQ1-tRNA) to give epoxyqueuosine (oQ-tRNA). This is S-adenosylmethionine:tRNA ribosyltransferase-isomerase from Rhizobium leguminosarum bv. trifolii (strain WSM2304).